The sequence spans 180 residues: Major urinary protein 2 (180 aa).

Positions 1-18 are cleaved as a signal peptide; the sequence is MKMLLLLCLGLTLVCVHA. Cysteines 82 and 175 form a disulfide.

Belongs to the calycin superfamily. Lipocalin family. As to expression, abundant in the urine of adult male mice but absent from that of females.

It localises to the secreted. Its function is as follows. Binds pheromones that are released from drying urine of males. These pheromones affect the sexual behavior of females. This Mus musculus (Mouse) protein is Major urinary protein 2 (Mup2).